A 499-amino-acid chain; its full sequence is Glutamyl-tRNA(Gln) amidotransferase subunit A (499 aa).

Residues Lys-75 and Ser-150 each act as charge relay system in the active site. The Acyl-ester intermediate role is filled by Ser-174.

Belongs to the amidase family. GatA subfamily. In terms of assembly, heterotrimer of A, B and C subunits.

It carries out the reaction L-glutamyl-tRNA(Gln) + L-glutamine + ATP + H2O = L-glutaminyl-tRNA(Gln) + L-glutamate + ADP + phosphate + H(+). Functionally, allows the formation of correctly charged Gln-tRNA(Gln) through the transamidation of misacylated Glu-tRNA(Gln) in organisms which lack glutaminyl-tRNA synthetase. The reaction takes place in the presence of glutamine and ATP through an activated gamma-phospho-Glu-tRNA(Gln). This is Glutamyl-tRNA(Gln) amidotransferase subunit A from Ralstonia pickettii (strain 12J).